A 687-amino-acid polypeptide reads, in one-letter code: Geranylgeranyl transferase type-2 subunit alpha 2 (687 aa).

PFTA repeat units lie at residues Tyr38–Asp72, Ile83–His117, Tyr132–Thr167, Ser168–Ala203, and Thr214–Lys248. LRR repeat units lie at residues Met523 to Leu545, Leu546 to Met567, Gln568 to His591, Leu592 to Tyr616, and Leu646 to Ser668.

This sequence belongs to the protein prenyltransferase subunit alpha family. In terms of assembly, heterotrimer composed of the alpha subunit RGTA, the beta subunit RGTB and REP; within this trimer, RGTA and RGTB form the catalytic component, while REP mediates peptide substrate binding.

It catalyses the reaction geranylgeranyl diphosphate + L-cysteinyl-[protein] = S-geranylgeranyl-L-cysteinyl-[protein] + diphosphate. With respect to regulation, the enzymatic reaction requires the aid of the Rab escort protein REP. Catalyzes the transfer of a geranylgeranyl moiety from geranylgeranyl diphosphate to both cysteines of Rab proteins with the C-terminal sequence -CCXX, CXXX, -XCCX and -XCXC, such as RABA1A, RABA2A, RABF2A and RABG2. Does not seem to be a functional Rab-GGT alpha subunit in vitro. The protein is Geranylgeranyl transferase type-2 subunit alpha 2 of Arabidopsis thaliana (Mouse-ear cress).